The chain runs to 225 residues: 3-dehydroquinate dehydratase (225 aa).

3-dehydroquinate is bound by residues Ser-6, 30 to 32, and Arg-62; that span reads EWR. His-118 acts as the Proton donor/acceptor in catalysis. Catalysis depends on Lys-143, which acts as the Schiff-base intermediate with substrate. 3-dehydroquinate-binding residues include Arg-186, Ser-205, and Gln-209.

It belongs to the type-I 3-dehydroquinase family. Homodimer.

It catalyses the reaction 3-dehydroquinate = 3-dehydroshikimate + H2O. Its pathway is metabolic intermediate biosynthesis; chorismate biosynthesis; chorismate from D-erythrose 4-phosphate and phosphoenolpyruvate: step 3/7. Functionally, involved in the third step of the chorismate pathway, which leads to the biosynthesis of aromatic amino acids. Catalyzes the cis-dehydration of 3-dehydroquinate (DHQ) and introduces the first double bond of the aromatic ring to yield 3-dehydroshikimate. This chain is 3-dehydroquinate dehydratase, found in Streptococcus sanguinis (strain SK36).